A 93-amino-acid chain; its full sequence is DNA-binding protein Fis (93 aa).

The H-T-H motif DNA-binding region spans 74 to 93 (QTRAAQMMGINRGTLRKKLK).

This sequence belongs to the transcriptional regulatory Fis family. Homodimer.

Functionally, activates ribosomal RNA transcription. Plays a direct role in upstream activation of rRNA promoters. The polypeptide is DNA-binding protein Fis (Proteus vulgaris).